Consider the following 726-residue polypeptide: Methionine--tRNA ligase (726 aa).

Positions 12 to 22 match the 'HIGH' region motif; the sequence is PYVNNIPHLGN. 4 residues coordinate Zn(2+): C143, C146, C155, and C158. Residues 330–334 carry the 'KMSKS' region motif; sequence KFSKS. K333 is a binding site for ATP. Residues 562-667 form the tRNA-binding domain; the sequence is FSEQICLKTV…DNPIPGERVI (106 aa).

The protein belongs to the class-I aminoacyl-tRNA synthetase family. MetG type 1 subfamily. In terms of assembly, homodimer. Zn(2+) is required as a cofactor.

The protein localises to the cytoplasm. It catalyses the reaction tRNA(Met) + L-methionine + ATP = L-methionyl-tRNA(Met) + AMP + diphosphate. Its function is as follows. Is required not only for elongation of protein synthesis but also for the initiation of all mRNA translation through initiator tRNA(fMet) aminoacylation. In Borrelia duttonii (strain Ly), this protein is Methionine--tRNA ligase.